A 413-amino-acid chain; its full sequence is Protein LAZY 1 (413 aa).

Residues 71–91 (FTFGGSGLLTIGTLGIAAVAV) traverse the membrane as a helical segment. Acidic residues predominate over residues 103–124 (DADADSDFDDNDDTAGDDEDQV). 2 disordered regions span residues 103–127 (DADA…VDSA) and 261–308 (EDGG…ASAT). 2 consecutive short sequence motifs (nuclear localization signal) follow at residues 275 to 298 (RKAG…EKVP) and 338 to 345 (KKSRKRGS).

It belongs to the LAZY family. In terms of tissue distribution, expressed in the node of the stem, initiating leaf founder cells, young leaf primordia, tips of axillary meristems, spikelet pair meristems of developing tassels and ears, male flower primordia, tassels, ears, silks and seeds. Expressed in leaf sheaths, leaf pulvinus and shoot apical meristem (SAM).

The protein localises to the cell membrane. The protein resides in the nucleus. Functionally, involved in the regulation of shoot gravitropism, and tassel and ear development through the regulation of polar auxin transport (PAT) and auxin signaling. Acts as a negative regulator of basipetal PAT, but positive regulator of lateral auxin transport. Involved in the regulation of shoot gravitropism and leaf angle through the regulation of cell development. This chain is Protein LAZY 1, found in Zea mays (Maize).